Reading from the N-terminus, the 647-residue chain is Chaperone protein HtpG (647 aa).

The interval 1–353 (MNAHVEQLEF…AQDMSLNVSR (353 aa)) is a; substrate-binding. The b stretch occupies residues 354–567 (EILQQDRQIK…AFGMTPALAR (214 aa)). The c stretch occupies residues 568 to 647 (IYRASGQEVP…LLAERLARTL (80 aa)).

It belongs to the heat shock protein 90 family. In terms of assembly, homodimer.

The protein resides in the cytoplasm. In terms of biological role, molecular chaperone. Has ATPase activity. The protein is Chaperone protein HtpG of Mycobacterium bovis (strain ATCC BAA-935 / AF2122/97).